The sequence spans 54 residues: Large ribosomal subunit protein bL33A (54 aa).

This sequence belongs to the bacterial ribosomal protein bL33 family.

The sequence is that of Large ribosomal subunit protein bL33A from Mycolicibacterium paratuberculosis (strain ATCC BAA-968 / K-10) (Mycobacterium paratuberculosis).